The sequence spans 157 residues: Small ribosomal subunit protein uS7 (157 aa).

It belongs to the universal ribosomal protein uS7 family. As to quaternary structure, part of the 30S ribosomal subunit. Contacts proteins S9 and S11.

Functionally, one of the primary rRNA binding proteins, it binds directly to 16S rRNA where it nucleates assembly of the head domain of the 30S subunit. Is located at the subunit interface close to the decoding center, probably blocks exit of the E-site tRNA. In Hydrogenovibrio crunogenus (strain DSM 25203 / XCL-2) (Thiomicrospira crunogena), this protein is Small ribosomal subunit protein uS7.